A 670-amino-acid chain; its full sequence is Transketolase, plasmid (670 aa).

A substrate-binding site is contributed by His32. Thiamine diphosphate is bound by residues His72 and 120-122 (GPL). Position 161 (Asp161) interacts with Mg(2+). 2 residues coordinate thiamine diphosphate: Gly162 and Asn191. 2 residues coordinate Mg(2+): Asn191 and Ile193. Substrate-binding residues include His267, Arg364, and Ser391. A thiamine diphosphate-binding site is contributed by His267. Residue Glu417 is the Proton donor of the active site. Phe443 lines the thiamine diphosphate pocket. His467, Asp475, and Arg526 together coordinate substrate.

The protein belongs to the transketolase family. In terms of assembly, homodimer. Mg(2+) serves as cofactor. It depends on Ca(2+) as a cofactor. Requires Mn(2+) as cofactor. Co(2+) is required as a cofactor. The cofactor is thiamine diphosphate.

It catalyses the reaction D-sedoheptulose 7-phosphate + D-glyceraldehyde 3-phosphate = aldehydo-D-ribose 5-phosphate + D-xylulose 5-phosphate. The protein operates within carbohydrate biosynthesis; Calvin cycle. Functionally, catalyzes the transfer of a two-carbon ketol group from a ketose donor to an aldose acceptor, via a covalent intermediate with the cofactor thiamine pyrophosphate. In Cupriavidus necator (strain ATCC 17699 / DSM 428 / KCTC 22496 / NCIMB 10442 / H16 / Stanier 337) (Ralstonia eutropha), this protein is Transketolase, plasmid (cbbTP).